The primary structure comprises 284 residues: Bifunctional protein FolD 2 (284 aa).

NADP(+) contacts are provided by residues 166 to 168 (GAS) and Ile-232.

This sequence belongs to the tetrahydrofolate dehydrogenase/cyclohydrolase family. As to quaternary structure, homodimer.

It catalyses the reaction (6R)-5,10-methylene-5,6,7,8-tetrahydrofolate + NADP(+) = (6R)-5,10-methenyltetrahydrofolate + NADPH. The enzyme catalyses (6R)-5,10-methenyltetrahydrofolate + H2O = (6R)-10-formyltetrahydrofolate + H(+). It functions in the pathway one-carbon metabolism; tetrahydrofolate interconversion. Functionally, catalyzes the oxidation of 5,10-methylenetetrahydrofolate to 5,10-methenyltetrahydrofolate and then the hydrolysis of 5,10-methenyltetrahydrofolate to 10-formyltetrahydrofolate. The polypeptide is Bifunctional protein FolD 2 (Pseudomonas putida (strain ATCC 47054 / DSM 6125 / CFBP 8728 / NCIMB 11950 / KT2440)).